We begin with the raw amino-acid sequence, 127 residues long: Major sperm protein 49 (127 aa).

N-acetylalanine is present on alanine 2. The region spanning 9-126 is the MSP domain; it reads DIQTQPGTKI…RRKNLPIEYN (118 aa).

Sperm.

The protein localises to the cell projection. It is found in the pseudopodium. The protein resides in the cytoplasm. It localises to the cytoskeleton. Central component in molecular interactions underlying sperm crawling. Forms an extensive filament system that extends from sperm villipoda, along the leading edge of the pseudopod. The protein is Major sperm protein 49 (msp-49) of Caenorhabditis elegans.